A 108-amino-acid polypeptide reads, in one-letter code: Protein S100-A15A (108 aa).

The 36-residue stretch at 53–88 (KEPYYVTELFQATDKNRDNQICFDEFLYILGKLVKD) folds into the EF-hand domain. Ca(2+)-binding residues include aspartate 66, asparagine 68, aspartate 70, glutamine 72, and glutamate 77.

It belongs to the S-100 family.

The protein is Protein S100-A15A (S100A15A) of Gorilla gorilla gorilla (Western lowland gorilla).